Consider the following 316-residue polypeptide: MASKAKKRAVGNGIQRPLGAPGQREEEEEEEDEVEDEEEDEDDSDEEEDEVDEIVDEEVNIEFEAYSISDNDYGGIKKLLQQLFLKAPVNTAELTNLLMQQNHIGSVIKQTDVSEDSDDEVDEDEIFGFISLLNLTERKGTQCAEQIKELVLSFCEKTCEQSMVEQLDKLLNDTSKPVGLLLSERFINVPPQIALPMHQQLQKELSEARRTNKPCGKCCFYLLISKTFMEAGKSSSRKRQDSLQQGALMFANAEEEFFYEKAILKFSYSVQGESDTRLGGRWSFDDVPMTPLRTVMVIPDDRMNEIMETLKDHLSV.

Residues 1-57 (MASKAKKRAVGNGIQRPLGAPGQREEEEEEEDEVEDEEEDEDDSDEEEDEVDEIVDE) are disordered. Positions 25-57 (EEEEEEEDEVEDEEEDEDDSDEEEDEVDEIVDE) are enriched in acidic residues. 2 positions are modified to phosphoserine: serine 44 and serine 114. The tract at residues 61-169 (IEFEAYSISD…EQSMVEQLDK (109 aa)) is interaction with BRCA2. Residues 163 to 261 (MVEQLDKLLN…NAEEEFFYEK (99 aa)) are interaction with CDKN1A. Serine 283 bears the Phosphoserine mark.

It belongs to the BCP1 family. Interacts with BRCA2, CDKN1A and MTDH/LYRIC. Interacts with DCTN1/p150-glued and ACTR1A/ARP1. Interacts with alpha-, beta- and gamma-tubulins. Interacts with TENT5C; the interaction has no effect on TENT5C poly(A) polymerase function. As to expression, expressed in the testes (at protein level).

It localises to the nucleus. It is found in the cytoplasm. Its subcellular location is the cytoskeleton. The protein resides in the microtubule organizing center. The protein localises to the centrosome. It localises to the centriole. It is found in the spindle pole. Functionally, during interphase, required for microtubule organizing and anchoring activities. During mitosis, required for the organization and stabilization of the spindle pole. May promote cell cycle arrest by enhancing the inhibition of CDK2 activity by CDKN1A. May be required for repair of DNA damage by homologous recombination in conjunction with BRCA2. May not be involved in non-homologous end joining (NHEJ). This chain is BRCA2 and CDKN1A-interacting protein (Bccip), found in Mus musculus (Mouse).